The following is a 111-amino-acid chain: Nucleoid-associated protein Teth39_2199 (111 aa).

Belongs to the YbaB/EbfC family. In terms of assembly, homodimer.

It localises to the cytoplasm. The protein resides in the nucleoid. Functionally, binds to DNA and alters its conformation. May be involved in regulation of gene expression, nucleoid organization and DNA protection. This Thermoanaerobacter pseudethanolicus (strain ATCC 33223 / 39E) (Clostridium thermohydrosulfuricum) protein is Nucleoid-associated protein Teth39_2199.